Consider the following 747-residue polypeptide: Protein tyrosine phosphatase domain-containing protein 1 (747 aa).

A disordered region spans residues Met-1–Lys-36. Polar residues predominate over residues Asp-11–Gly-21. A Tyrosine-protein phosphatase domain is found at Tyr-82 to Cys-253. Cys-190 functions as the Phosphocysteine intermediate in the catalytic mechanism. Phosphoserine is present on residues Ser-392, Ser-394, and Ser-543. Residues Ser-549–Ala-570 are disordered.

The protein belongs to the protein-tyrosine phosphatase family. Non-receptor class PTPDC1 subfamily.

Its function is as follows. May play roles in cilia formation and/or maintenance. The sequence is that of Protein tyrosine phosphatase domain-containing protein 1 (Ptpdc1) from Mus musculus (Mouse).